The primary structure comprises 429 residues: Adenylosuccinate synthetase (429 aa).

Residues 12-18 and 40-42 each bind GTP; these read GDEGKGK and GHT. Aspartate 13 functions as the Proton acceptor in the catalytic mechanism. Mg(2+) is bound by residues aspartate 13 and glycine 40. IMP-binding positions include 13–16, 38–41, threonine 128, arginine 142, glutamine 223, threonine 238, and arginine 302; these read DEGK and NAGH. Histidine 41 serves as the catalytic Proton donor. Substrate is bound at residue 298-304; sequence TVTGRPR. Residues arginine 304, 330 to 332, and 412 to 414 contribute to the GTP site; these read LLD and SVG.

The protein belongs to the adenylosuccinate synthetase family. Homodimer. Mg(2+) serves as cofactor.

It localises to the cytoplasm. It carries out the reaction IMP + L-aspartate + GTP = N(6)-(1,2-dicarboxyethyl)-AMP + GDP + phosphate + 2 H(+). It participates in purine metabolism; AMP biosynthesis via de novo pathway; AMP from IMP: step 1/2. Its function is as follows. Plays an important role in the de novo pathway of purine nucleotide biosynthesis. Catalyzes the first committed step in the biosynthesis of AMP from IMP. This is Adenylosuccinate synthetase from Lactobacillus helveticus (strain DPC 4571).